Reading from the N-terminus, the 466-residue chain is UDP-N-acetylglucosamine--dolichyl-phosphate N-acetylglucosaminephosphotransferase (466 aa).

A helical transmembrane segment spans residues 12–32 (AAFAVAAHAPVLGLILLGSIV). D57 is a UDP-N-acetyl-alpha-D-glucosamine binding site. A glycan (N-linked (GlcNAc...) asparagine) is linked at N59. E90 provides a ligand contact to UDP-N-acetyl-alpha-D-glucosamine. A run of 2 helical transmembrane segments spans residues 91-111 (SLGILVGAMYLSVVVVLTVCL) and 124-144 (PYASLPGPLMTITVMLLLGFV). K155 contacts dolichyl phosphate. Helical transmembrane passes span 156–176 (IILTALGSLPLIMTYDGSLSV) and 236–256 (GAALIYLGPVYLVYLSMLCIF). 255 to 263 (IFCTNSINI) contributes to the dolichyl phosphate binding site. N262 serves as a coordination point for Mg(2+). The next 4 helical transmembrane spans lie at 263–283 (ILAGVNGVEVGQSIVIAVASV), 316–336 (DHQLRALLLLGPFIGVSLALW), 345–365 (VFVGDSYTYFAGTVLAVSSIT), and 374–394 (LFFAPQVFNFLISLPQLFSIV). Position 268 (N268) interacts with UDP-N-acetyl-alpha-D-glucosamine. D349 provides a ligand contact to Mg(2+). 398 to 400 (RHR) is a binding site for UDP-N-acetyl-alpha-D-glucosamine. The N-linked (GlcNAc...) asparagine glycan is linked to N416. Residues 442–462 (CQVIACVLGFVVRYVLSAFLY) form a helical membrane-spanning segment.

This sequence belongs to the glycosyltransferase 4 family. Mg(2+) is required as a cofactor.

The protein resides in the endoplasmic reticulum membrane. It catalyses the reaction a di-trans,poly-cis-dolichyl phosphate + UDP-N-acetyl-alpha-D-glucosamine = an N-acetyl-alpha-D-glucosaminyl-diphospho-di-trans,poly-cis-dolichol + UMP. Its pathway is protein modification; protein glycosylation. With respect to regulation, inhibited by natural nucleoside antibiotic tunicamycin, which acts as a structural analog and competitor of UDP-GlcNAc. Functionally, UDP-N-acetylglucosamine--dolichyl-phosphate N-acetylglucosaminephosphotransferase that operates in the biosynthetic pathway of dolichol-linked oligosaccharides, the glycan precursors employed in protein asparagine (N)-glycosylation. The assembly of dolichol-linked oligosaccharides begins on the cytosolic side of the endoplasmic reticulum membrane and finishes in its lumen. The sequential addition of sugars to dolichol pyrophosphate produces dolichol-linked oligosaccharides containing fourteen sugars, including two GlcNAcs, nine mannoses and three glucoses. Once assembled, the oligosaccharide is transferred from the lipid to nascent proteins by oligosaccharyltransferases. Catalyzes the initial step of dolichol-linked oligosaccharide biosynthesis, transfering GlcNAc-1-P from cytosolic UDP-GlcNAc onto the carrier lipid dolichyl phosphate (P-dolichol), yielding GlcNAc-P-P-dolichol embedded in the cytoplasmic leaflet of the endoplasmic reticulum membrane. The chain is UDP-N-acetylglucosamine--dolichyl-phosphate N-acetylglucosaminephosphotransferase (NAGT) from Leishmania amazonensis.